A 556-amino-acid chain; its full sequence is MKTDIEIAQSVDLRPITNVVKKLGFDFDDLELYGKYKAKLTFDKIKAVEENAPGKLVLVTAINPTPAGEGKSTITIGLADALNKIGKKTMIAIREPSLGPVMGIKGGAAGGGYAQVLPMEDINLHFTGDMHAITTANNALSALIDNHLHQGNELGIDQRRIIWKRVVDLNDRALRHVTVGLGSPINGIPREDGFDITVASEIMAILCLATNVEDLKERLANIVIGYRFDRSPVYVRDLEVQGALALILKEAIKPNLVQTIYGTPAFVHGGPFANIAHGCNSVLATSTALRLADYTITEAGFGADLGAEKFLDIKAPNLPTSPDAVVIVATIRALKMNGGVAKDALNQENVEAVKAGFANLARHVENMRKYGVPVVVAINEFITDTNDEIAVLRNLCAAIDVPVELASVWANGADGGVDLANTLINTIENNPSHYKRLYDNNLSVEEKVTEIAKEIYRADKVIFEKKAKTQIAQIVKNGWDNLPICMAKTQYSFSDDPKLLGAPTGFDITIRELVPKLGAGFIVALTGDVMTMPGLPKKPAALNMDVAADGTALGLF.

65–72 (TPAGEGKS) provides a ligand contact to ATP.

The protein belongs to the formate--tetrahydrofolate ligase family.

It carries out the reaction (6S)-5,6,7,8-tetrahydrofolate + formate + ATP = (6R)-10-formyltetrahydrofolate + ADP + phosphate. It participates in one-carbon metabolism; tetrahydrofolate interconversion. The sequence is that of Formate--tetrahydrofolate ligase from Streptococcus mutans serotype c (strain ATCC 700610 / UA159).